Here is a 331-residue protein sequence, read N- to C-terminus: Ketol-acid reductoisomerase (NADP(+)) (331 aa).

One can recognise a KARI N-terminal Rossmann domain in the interval 2–182 (AKIYTDKDAS…GATRAGVIET (181 aa)). NADP(+) is bound by residues 25–28 (YGIQ), Arg-48, Ser-53, and 83–86 (DMEQ). His-108 is a catalytic residue. Gly-134 contacts NADP(+). The 146-residue stretch at 183–328 (TFAEETETDL…AEMRKLLFGR (146 aa)) folds into the KARI C-terminal knotted domain. Positions 191, 195, 227, and 231 each coordinate Mg(2+). Ser-252 is a binding site for substrate.

Belongs to the ketol-acid reductoisomerase family. The cofactor is Mg(2+).

The catalysed reaction is (2R)-2,3-dihydroxy-3-methylbutanoate + NADP(+) = (2S)-2-acetolactate + NADPH + H(+). It carries out the reaction (2R,3R)-2,3-dihydroxy-3-methylpentanoate + NADP(+) = (S)-2-ethyl-2-hydroxy-3-oxobutanoate + NADPH + H(+). Its pathway is amino-acid biosynthesis; L-isoleucine biosynthesis; L-isoleucine from 2-oxobutanoate: step 2/4. It functions in the pathway amino-acid biosynthesis; L-valine biosynthesis; L-valine from pyruvate: step 2/4. Its function is as follows. Involved in the biosynthesis of branched-chain amino acids (BCAA). Catalyzes an alkyl-migration followed by a ketol-acid reduction of (S)-2-acetolactate (S2AL) to yield (R)-2,3-dihydroxy-isovalerate. In the isomerase reaction, S2AL is rearranged via a Mg-dependent methyl migration to produce 3-hydroxy-3-methyl-2-ketobutyrate (HMKB). In the reductase reaction, this 2-ketoacid undergoes a metal-dependent reduction by NADPH to yield (R)-2,3-dihydroxy-isovalerate. This Pyrobaculum islandicum (strain DSM 4184 / JCM 9189 / GEO3) protein is Ketol-acid reductoisomerase (NADP(+)).